The sequence spans 530 residues: Autoinducer-2 kinase (530 aa).

Belongs to the FGGY kinase family.

It localises to the cytoplasm. It catalyses the reaction (S)-4,5-dihydroxypentane-2,3-dione + ATP = (2S)-2-hydroxy-3,4-dioxopentyl phosphate + ADP + H(+). Its function is as follows. Catalyzes the phosphorylation of autoinducer-2 (AI-2) to phospho-AI-2, which subsequently inactivates the transcriptional regulator LsrR and leads to the transcription of the lsr operon. Phosphorylates the ring-open form of (S)-4,5-dihydroxypentane-2,3-dione (DPD), which is the precursor to all AI-2 signaling molecules, at the C5 position. The polypeptide is Autoinducer-2 kinase (Salmonella choleraesuis (strain SC-B67)).